Here is a 120-residue protein sequence, read N- to C-terminus: UPF0344 protein LMOf2365_2298 (120 aa).

The next 4 helical transmembrane spans lie at 3–23 (GYIH…ALLI), 33–53 (MLQM…IMMV), 62–82 (ILAI…EMLL), and 92–112 (GMFL…GFYL).

Belongs to the UPF0344 family.

It is found in the cell membrane. In Listeria monocytogenes serotype 4b (strain F2365), this protein is UPF0344 protein LMOf2365_2298.